We begin with the raw amino-acid sequence, 340 residues long: L-threonine 3-dehydrogenase (340 aa).

C38 serves as a coordination point for Zn(2+). Catalysis depends on charge relay system residues T40 and H43. Zn(2+)-binding residues include H63, E64, C93, C96, C99, and C107. Residues I175, D195, R200, 262–264, and 286–287 contribute to the NAD(+) site; these read LGI and IY.

It belongs to the zinc-containing alcohol dehydrogenase family. As to quaternary structure, homotetramer. It depends on Zn(2+) as a cofactor.

The protein localises to the cytoplasm. The enzyme catalyses L-threonine + NAD(+) = (2S)-2-amino-3-oxobutanoate + NADH + H(+). Its pathway is amino-acid degradation; L-threonine degradation via oxydo-reductase pathway; glycine from L-threonine: step 1/2. In terms of biological role, catalyzes the NAD(+)-dependent oxidation of L-threonine to 2-amino-3-ketobutyrate. In Pseudoalteromonas atlantica (strain T6c / ATCC BAA-1087), this protein is L-threonine 3-dehydrogenase.